The primary structure comprises 466 residues: ATP synthase subunit beta (466 aa).

156-163 is a binding site for ATP; sequence GGAGVGKT.

Belongs to the ATPase alpha/beta chains family. In terms of assembly, F-type ATPases have 2 components, CF(1) - the catalytic core - and CF(0) - the membrane proton channel. CF(1) has five subunits: alpha(3), beta(3), gamma(1), delta(1), epsilon(1). CF(0) has three main subunits: a(1), b(2) and c(9-12). The alpha and beta chains form an alternating ring which encloses part of the gamma chain. CF(1) is attached to CF(0) by a central stalk formed by the gamma and epsilon chains, while a peripheral stalk is formed by the delta and b chains.

The protein localises to the cell membrane. The catalysed reaction is ATP + H2O + 4 H(+)(in) = ADP + phosphate + 5 H(+)(out). In terms of biological role, produces ATP from ADP in the presence of a proton gradient across the membrane. The catalytic sites are hosted primarily by the beta subunits. The chain is ATP synthase subunit beta from Polynucleobacter asymbioticus (strain DSM 18221 / CIP 109841 / QLW-P1DMWA-1) (Polynucleobacter necessarius subsp. asymbioticus).